A 179-amino-acid polypeptide reads, in one-letter code: Translation initiation factor IF-3 (179 aa).

The protein belongs to the IF-3 family. In terms of assembly, monomer.

The protein localises to the cytoplasm. Functionally, IF-3 binds to the 30S ribosomal subunit and shifts the equilibrium between 70S ribosomes and their 50S and 30S subunits in favor of the free subunits, thus enhancing the availability of 30S subunits on which protein synthesis initiation begins. The polypeptide is Translation initiation factor IF-3 (Buchnera aphidicola subsp. Acyrthosiphon pisum (strain 5A)).